The primary structure comprises 528 residues: DEAD-box ATP-dependent RNA helicase 6 (528 aa).

Low complexity-rich tracts occupy residues 1–15 (MNNN…PPGI) and 65–80 (QQYV…QQQQ). The tract at residues 1–80 (MNNNNNNRGR…GYPQQIQQQQ (80 aa)) is disordered. A Q motif motif is present at residues 154 to 182 (NEFEDYFLKRDLLRGIYEKGFEKPSPIQE). The Helicase ATP-binding domain maps to 185 to 355 (IPIALTGSDI…DRYLKKPYII (171 aa)). Position 198 to 205 (198 to 205 (AKNGTGKT)) interacts with ATP. Position 260 is a phosphothreonine (Thr260). The short motif at 303 to 306 (DEAD) is the DEAD box element. The region spanning 365 to 525 (GVTQYYAFVE…PIPSLIDKAI (161 aa)) is the Helicase C-terminal domain.

It belongs to the DEAD box helicase family. DDX6/DHH1 subfamily.

It localises to the cytoplasm. Its subcellular location is the P-body. It catalyses the reaction ATP + H2O = ADP + phosphate + H(+). Its function is as follows. ATP-dependent RNA helicase involved in mRNA turnover, and more specifically in mRNA decapping. The chain is DEAD-box ATP-dependent RNA helicase 6 (RH6) from Arabidopsis thaliana (Mouse-ear cress).